The following is an 822-amino-acid chain: Outer dense fiber protein 2 (822 aa).

The tract at residues 26–45 (KGQKTTPAKCQQKHKQKMKG) is disordered. Coiled-coil stretches lie at residues 113-418 (CKMN…EECA), 452-490 (DKSDLELEMVTVNSRIADLLEQQATLEDKMREDRDALMD), and 516-796 (MEEK…NYVQ).

Belongs to the ODF2 family. As to quaternary structure, self-associates. Associates with microtubules and forms a fibrillar structure partially linked to the microtubule network.

It localises to the cytoplasm. Its subcellular location is the cytoskeleton. It is found in the microtubule organizing center. The protein localises to the centrosome. The protein resides in the cell projection. It localises to the cilium. Its subcellular location is the centriole. It is found in the spindle pole. The protein localises to the flagellum. In terms of biological role, seems to be a major component of sperm tail outer dense fibers (ODF). ODFs are filamentous structures located on the outside of the axoneme in the midpiece and principal piece of the mammalian sperm tail and may help to maintain the passive elastic structures and elastic recoil of the sperm tail. This Gallus gallus (Chicken) protein is Outer dense fiber protein 2 (ODF2).